Consider the following 164-residue polypeptide: MAKSFVPLIAVLCVLVLPLAAMAVGTPFHIEGSVYCDTCRFGFETIATQYIRGARVRIVCKDRVTLKSELVGVAVTGPDGKYKVAVRGDRQDQQCLAELVHSPLSRCQEADPGRSTATVILTRSNGAASTRHYANAMGFFRDEPLRGCAALRKRYLADGDNRAI.

The first 23 residues, 1 to 23 (MAKSFVPLIAVLCVLVLPLAAMA), serve as a signal peptide directing secretion. 3 disulfide bridges follow: C36–C107, C39–C148, and C60–C95.

It belongs to the Ole e I family.

It is found in the secreted. Its function is as follows. Part of a three-gene cluster containing FLC, UFC and DFC, which is coordinately regulated in response to vernalization. Not regulated by FLX. The protein is Protein DOWNSTREAM OF FLC (DFC) of Arabidopsis thaliana (Mouse-ear cress).